We begin with the raw amino-acid sequence, 233 residues long: Large ribosomal subunit protein uL1 (233 aa).

Belongs to the universal ribosomal protein uL1 family. In terms of assembly, part of the 50S ribosomal subunit.

In terms of biological role, binds directly to 23S rRNA. The L1 stalk is quite mobile in the ribosome, and is involved in E site tRNA release. Its function is as follows. Protein L1 is also a translational repressor protein, it controls the translation of the L11 operon by binding to its mRNA. This chain is Large ribosomal subunit protein uL1, found in Shewanella amazonensis (strain ATCC BAA-1098 / SB2B).